Reading from the N-terminus, the 314-residue chain is Solute carrier family 25 member 44 (314 aa).

3 Solcar repeats span residues 18-100 (KKFY…TRKF), 107-210 (SNTV…YAEQ), and 220-302 (PHIV…LKKL). 6 helical membrane-spanning segments follow: residues 20 to 42 (FYVFGVAMTMMIRVSVYPFTLIR), 71 to 90 (TGLYRGFLVNTFTLISGQCY), 113 to 133 (LVAGGSASLVAQSITVPIDVV), 185 to 201 (GYVASLLTYIPNSAVWW), 222 to 239 (IVFQAVSGPLAAATASIL), and 278 to 296 (LSARIISATPSTIVIVVGY).

The protein belongs to the mitochondrial carrier (TC 2.A.29) family.

It localises to the mitochondrion membrane. The enzyme catalyses L-valine(in) = L-valine(out). The catalysed reaction is L-leucine(in) = L-leucine(out). In terms of biological role, mitochondrial solute transporter which transports branched-chain amino acid (BCAA; valine, leucine and isoleucine) into mitochondria in brown adipose tissue (BAT). BAT is involved in BCAA catabolism and actively utilizes BCAA in the mitochondria for thermogenesis. The protein is Solute carrier family 25 member 44 of Homo sapiens (Human).